A 120-amino-acid chain; its full sequence is Prophage bactoprenol-linked glucose translocase homolog (120 aa).

Over 1–9 (MLKLFAKYT) the chain is Cytoplasmic. The chain crosses the membrane as a helical span at residues 10–30 (SIGVLNTLIHWVVFGVCIYVA). The Periplasmic portion of the chain corresponds to 31 to 33 (HTN). Residues 34–54 (QALANFAGFVVAVSFSFFANA) form a helical membrane-spanning segment. The Cytoplasmic portion of the chain corresponds to 55 to 64 (KFTFKASTTT). The helical transmembrane segment at 65–85 (MRYMLYVGFMGTLSATVGWAA) threads the bilayer. At 86–88 (DRC) the chain is on the periplasmic side. The helical transmembrane segment at 89–109 (ALPPMITLVTFSAISLVCGFV) threads the bilayer. Over 110 to 120 (YSKFIVFRDAK) the chain is Cytoplasmic.

Belongs to the GtrA family.

The protein resides in the cell inner membrane. Functionally, involved in O antigen modification. Involved in the translocation of bactoprenol-linked glucose across the cytoplasmic membrane. The sequence is that of Prophage bactoprenol-linked glucose translocase homolog (yfdG) from Escherichia coli (strain K12).